The chain runs to 139 residues: uncharacterized protein (139 aa).

A run of 2 helical transmembrane segments spans residues 71 to 91 (LFSALLMYIVQLFTLLVATLL) and 97 to 117 (ENELIRAILIFMLTALSFVMV).

This sequence belongs to the RseC family.

It localises to the cell inner membrane. This is an uncharacterized protein from Haemophilus influenzae (strain ATCC 51907 / DSM 11121 / KW20 / Rd).